The chain runs to 318 residues: MSVLLIALFSLILLLALLGAAGVFTWGERRLLGFLQERLGPNRVGPFGFLQWVADTLKLLTKEDAPPAGADLAAYRLAPALAAFPMLAGFGVVAFAPRLVISDLDVGVLFVMGMLALTVWALVLGAWGSRNRYAMLGGLRAAAQMLAYESFLGLSLMGCVLLAGSFRMGDIVAAQEGGLWFILLQPLGAALFFLAGLAAAHRLPFDLQESEQDLVAGFMTEYSGMSFALFFLGEYLAILLVAALFTTLFLGGWAGPILPGPIWFGLKVAAISVVFVWLRAALPRPRYDQLISFAWKVALPLALLNLLVTAWIAVGRAA.

9 helical membrane passes run 4–24, 77–97, 106–126, 146–166, 179–199, 214–234, 238–258, 262–282, and 293–313; these read LLIA…AGVF, LAPA…AFAP, VGVL…VLGA, LAYE…AGSF, LWFI…GLAA, LVAG…FLGE, ILLV…GPIL, IWFG…RAAL, and FAWK…AWIA.

This sequence belongs to the complex I subunit 1 family. NDH-1 is composed of 14 different subunits. Subunits NuoA, H, J, K, L, M, N constitute the membrane sector of the complex.

Its subcellular location is the cell inner membrane. It catalyses the reaction a quinone + NADH + 5 H(+)(in) = a quinol + NAD(+) + 4 H(+)(out). NDH-1 shuttles electrons from NADH, via FMN and iron-sulfur (Fe-S) centers, to quinones in the respiratory chain. The immediate electron acceptor for the enzyme in this species is believed to be ubiquinone. Couples the redox reaction to proton translocation (for every two electrons transferred, four hydrogen ions are translocated across the cytoplasmic membrane), and thus conserves the redox energy in a proton gradient. This subunit may bind ubiquinone. The polypeptide is NADH-quinone oxidoreductase subunit H 2 (Cereibacter sphaeroides (strain ATCC 17023 / DSM 158 / JCM 6121 / CCUG 31486 / LMG 2827 / NBRC 12203 / NCIMB 8253 / ATH 2.4.1.) (Rhodobacter sphaeroides)).